A 396-amino-acid chain; its full sequence is Elongation factor Tu (396 aa).

One can recognise a tr-type G domain in the interval Lys-10 to Glu-206. The tract at residues Gly-19–Thr-26 is G1. GTP is bound at residue Gly-19 to Thr-26. Thr-26 is a binding site for Mg(2+). The segment at Gly-60–Ser-64 is G2. Positions Asp-81–Gly-84 are G3. GTP-binding positions include Asp-81–His-85 and Asn-136–Asp-139. Positions Asn-136–Asp-139 are G4. A G5 region spans residues Ser-174–Leu-176.

It belongs to the TRAFAC class translation factor GTPase superfamily. Classic translation factor GTPase family. EF-Tu/EF-1A subfamily. Monomer.

It localises to the cytoplasm. The catalysed reaction is GTP + H2O = GDP + phosphate + H(+). Its function is as follows. GTP hydrolase that promotes the GTP-dependent binding of aminoacyl-tRNA to the A-site of ribosomes during protein biosynthesis. In Xylella fastidiosa (strain 9a5c), this protein is Elongation factor Tu.